Here is a 144-residue protein sequence, read N- to C-terminus: Large ribosomal subunit protein uL16 (144 aa).

Residues 1–17 (MLQPKKTKFRRQQKGRA) show a composition bias toward basic residues. A disordered region spans residues 1–22 (MLQPKKTKFRRQQKGRAKGNAQ).

This sequence belongs to the universal ribosomal protein uL16 family. Part of the 50S ribosomal subunit.

Its function is as follows. Binds 23S rRNA and is also seen to make contacts with the A and possibly P site tRNAs. The sequence is that of Large ribosomal subunit protein uL16 from Bacteroides fragilis (strain ATCC 25285 / DSM 2151 / CCUG 4856 / JCM 11019 / LMG 10263 / NCTC 9343 / Onslow / VPI 2553 / EN-2).